The primary structure comprises 280 residues: Cis-2,3-dihydrobiphenyl-2,3-diol dehydrogenase (280 aa).

Residue 9-33 participates in NAD(+) binding; it reads LVTGGCAGLGRAIVDRFVCEGARVA. A substrate-binding site is contributed by Ser142. Tyr155 (proton acceptor) is an active-site residue.

The protein belongs to the short-chain dehydrogenases/reductases (SDR) family.

It catalyses the reaction (2R,3S)-3-phenylcyclohexa-3,5-diene-1,2-diol + NAD(+) = biphenyl-2,3-diol + NADH + H(+). Its pathway is xenobiotic degradation; biphenyl degradation; 2-hydroxy-2,4-pentadienoate and benzoate from biphenyl: step 2/4. In Rhodococcus globerulus, this protein is Cis-2,3-dihydrobiphenyl-2,3-diol dehydrogenase (bphB).